Consider the following 496-residue polypeptide: Coiled-coil domain-containing protein 77 (496 aa).

The segment at 1–42 is disordered; that stretch reads MDFSPPHGLRGGRSPSLQDTTISSSHTQKNGGDSTPLPPINE. Over residues 15–33 the composition is skewed to polar residues; sequence PSLQDTTISSSHTQKNGGD. Positions 51–113 form a coiled coil; that stretch reads RELLEYYRKK…KALSDMQVYL (63 aa). Residues 170 to 208 are disordered; sequence QRTVQSGDPFDRKVQRSGRAGVKQVPLKAPGKQDRTKAA. Residues 214-495 are a coiled coil; that stretch reads QILLLQVEAL…IYGLENELRI (282 aa).

This Xenopus laevis (African clawed frog) protein is Coiled-coil domain-containing protein 77 (ccdc77).